A 290-amino-acid polypeptide reads, in one-letter code: NAD kinase (290 aa).

Asp-72 acts as the Proton acceptor in catalysis. Residues 72-73, Lys-77, 145-146, Asp-175, 186-191, and Ala-210 each bind NAD(+); these read DG, NE, and TAYSLS.

It belongs to the NAD kinase family. A divalent metal cation serves as cofactor.

It localises to the cytoplasm. It carries out the reaction NAD(+) + ATP = ADP + NADP(+) + H(+). Functionally, involved in the regulation of the intracellular balance of NAD and NADP, and is a key enzyme in the biosynthesis of NADP. Catalyzes specifically the phosphorylation on 2'-hydroxyl of the adenosine moiety of NAD to yield NADP. The protein is NAD kinase of Bacteroides fragilis (strain ATCC 25285 / DSM 2151 / CCUG 4856 / JCM 11019 / LMG 10263 / NCTC 9343 / Onslow / VPI 2553 / EN-2).